Here is a 258-residue protein sequence, read N- to C-terminus: Insulin-like growth factor-binding protein 4 (258 aa).

An N-terminal signal peptide occupies residues 1-21 (MLSLCLMAALLLAAGPGPSLG). An IGFBP N-terminal domain is found at 23–103 (EAIHCPPCSE…VHGQGVCMEL (81 aa)). 6 disulfides stabilise this stretch: C27–C53, C30–C55, C38–C56, C44–C59, C67–C80, and C74–C100. A glycan (N-linked (GlcNAc...) asparagine) is linked at N125. 4 disulfide bridges follow: C131–C138, C174–C204, C215–C226, and C228–C249. Residues 171-249 (QGSCQSELHR…GLEPKGELDC (79 aa)) enclose the Thyroglobulin type-1 domain. At S255 the chain carries Phosphoserine.

Binds IGF2 more than IGF1.

The protein resides in the secreted. Functionally, IGF-binding proteins prolong the half-life of the IGFs and have been shown to either inhibit or stimulate the growth promoting effects of the IGFs on cell culture. They alter the interaction of IGFs with their cell surface receptors. The chain is Insulin-like growth factor-binding protein 4 (IGFBP4) from Bos taurus (Bovine).